The following is a 146-amino-acid chain: Hemoglobin subunit beta (146 aa).

The 145-residue stretch at 2–146 (HWTAEEKQLI…VAHALARKYH (145 aa)) folds into the Globin domain. Residues His63 and His92 each coordinate heme b.

This sequence belongs to the globin family. Heterotetramer of two alpha chains and two beta chains. As to expression, red blood cells.

Involved in oxygen transport from the lung to the various peripheral tissues. This is Hemoglobin subunit beta (HBB) from Phalacrocorax carbo (Great cormorant).